The following is a 558-amino-acid chain: Formate--tetrahydrofolate ligase 2 (558 aa).

67 to 74 lines the ATP pocket; the sequence is TPAGEGKT.

It belongs to the formate--tetrahydrofolate ligase family.

The catalysed reaction is (6S)-5,6,7,8-tetrahydrofolate + formate + ATP = (6R)-10-formyltetrahydrofolate + ADP + phosphate. Its pathway is one-carbon metabolism; tetrahydrofolate interconversion. This chain is Formate--tetrahydrofolate ligase 2, found in Desulfitobacterium hafniense (strain Y51).